We begin with the raw amino-acid sequence, 104 residues long: Cytochrome c-551 (104 aa).

Residues 1–22 (MKKILIPMLALGGALAMQPALA) form the signal peptide. 4 residues coordinate heme c: Cys34, Cys37, His38, and Met83.

Post-translationally, binds 1 heme c group covalently per subunit.

Its subcellular location is the periplasm. Functionally, electron donor for cytochrome cd1 in nitrite and nitrate respiration. In Stutzerimonas stutzeri (Pseudomonas stutzeri), this protein is Cytochrome c-551 (nirM).